The chain runs to 203 residues: Glycerol-3-phosphate acyltransferase (203 aa).

The next 6 membrane-spanning stretches (helical) occupy residues 3 to 23, 51 to 71, 74 to 94, 116 to 136, 140 to 160, and 164 to 178; these read ILLA…VVVS, KAAI…VWLV, FGIG…LGHL, AVHP…AFFF, SLAA…LFGT, and PVAW…LLIW.

It belongs to the PlsY family. As to quaternary structure, probably interacts with PlsX.

It localises to the cell inner membrane. The enzyme catalyses an acyl phosphate + sn-glycerol 3-phosphate = a 1-acyl-sn-glycero-3-phosphate + phosphate. It participates in lipid metabolism; phospholipid metabolism. Functionally, catalyzes the transfer of an acyl group from acyl-phosphate (acyl-PO(4)) to glycerol-3-phosphate (G3P) to form lysophosphatidic acid (LPA). This enzyme utilizes acyl-phosphate as fatty acyl donor, but not acyl-CoA or acyl-ACP. This chain is Glycerol-3-phosphate acyltransferase, found in Burkholderia mallei (strain ATCC 23344).